The sequence spans 410 residues: Beta-arrestin-1 (410 aa).

The segment at 1–163 (MGDKGTRVFK…LEEKIHKRNS (163 aa)) is interaction with SRC. The tract at residues 45 to 86 (PEYLKERRVYVTLTCAFRYGREDLDVLGLTFRKDLFVANVQS) is interaction with CHRM2. A Phosphotyrosine modification is found at Y47. 1D-myo-inositol hexakisphosphate is bound by residues K250, M255, K324, and K326. An interaction with TRAF6 region spans residues 318 to 410 (IVSYKVKVKL…GTGSPQLNNR (93 aa)). The [DE]-X(1,2)-F-X-X-[FL]-X-X-X-R motif motif lies at 385–395 (RQRLKGMKDDK). The interval 389-410 (KGMKDDKEEEENGTGSPQLNNR) is disordered. The span at 401–410 (GTGSPQLNNR) shows a compositional bias: polar residues. S404 is subject to Phosphoserine; by GRK5.

Belongs to the arrestin family. In terms of assembly, monomer. Homodimer. Homooligomer; the self-association is mediated by InsP6-binding. Heterooligomer with ARRB2; the association is mediated by InsP6-binding. Interacts with ADRB2 (phosphorylated). Interacts with CHRM2 (phosphorylated). Interacts with LHCGR. Interacts with CYTH2 and CASR. Interacts with AP2B1 (dephosphorylated); phosphorylation of AP2B1 disrupts the interaction. Interacts (dephosphorylated at Ser-404) with CLTC. Interacts with CCR2 and GRK2. Interacts with CRR5. Interacts with PTAFR (phosphorylated on serine residues). Interacts with CLTC and MAP2K3. Interacts with CREB1. Interacts with TRAF6. Interacts with IGF1R and MDM2. Interacts with C5AR1. Interacts with PDE4D. Interacts with SRC (via the SH3 domain and the protein kinase domain); the interaction is independent of the phosphorylation state of SRC C-terminus. Interacts with TACR1. Interacts with RAF1. Interacts with CHUK, IKBKB and MAP3K14. Interacts with DVL1; the interaction is enhanced by phosphorylation of DVL1. Interacts with DVL2; the interaction is enhanced by phosphorylation of DVL2. Interacts with IGF1R. Associates with MAP kinase p38. Part of a MAPK signaling complex consisting of TACR1, ARRB1, SRC, MAPK1 (activated) and MAPK3 (activated). Part of a MAPK signaling complex consisting of F2RL1, ARRB1, RAF1, MAPK1 (activated) and MAPK3 (activated). Interacts with GPR143. Interacts with MAP2K4/MKK4. Interacts with HCK and CXCR1 (phosphorylated). Interacts with ACKR3 and ACKR4. Interacts with ARRDC1; the interaction is direct. Interacts with GPR61, GPR62 and GPR135. Constitutively phosphorylated at in the cytoplasm. At the plasma membrane, is rapidly dephosphorylated, a process that is required for clathrin binding and ADRB2 endocytosis but not for ADRB2 binding and desensitization. Once internalized, is rephosphorylated. In terms of processing, the ubiquitination status appears to regulate the formation and trafficking of beta-arrestin-GPCR complexes and signaling. Ubiquitination appears to occur GPCR-specific. Ubiquitinated by MDM2; the ubiquitination is required for rapid internalization of ADRB2. Deubiquitinated by USP33; the deubiquitination leads to a dissociation of the beta-arrestin-GPCR complex. Stimulation of a class A GPCR, such as ADRB2, induces transient ubiquitination and subsequently promotes association with USP33.

The protein localises to the cytoplasm. It localises to the nucleus. Its subcellular location is the cell membrane. It is found in the membrane. The protein resides in the clathrin-coated pit. The protein localises to the cell projection. It localises to the pseudopodium. Its subcellular location is the cytoplasmic vesicle. Functions in regulating agonist-mediated G-protein coupled receptor (GPCR) signaling by mediating both receptor desensitization and resensitization processes. During homologous desensitization, beta-arrestins bind to the GPRK-phosphorylated receptor and sterically preclude its coupling to the cognate G-protein; the binding appears to require additional receptor determinants exposed only in the active receptor conformation. The beta-arrestins target many receptors for internalization by acting as endocytic adapters (CLASPs, clathrin-associated sorting proteins) and recruiting the GPRCs to the adapter protein 2 complex 2 (AP-2) in clathrin-coated pits (CCPs). However, the extent of beta-arrestin involvement appears to vary significantly depending on the receptor, agonist and cell type. Internalized arrestin-receptor complexes traffic to intracellular endosomes, where they remain uncoupled from G-proteins. Two different modes of arrestin-mediated internalization occur. Class A receptors, like ADRB2, OPRM1, ENDRA, D1AR and ADRA1B dissociate from beta-arrestin at or near the plasma membrane and undergo rapid recycling. Class B receptors, like AVPR2, AGTR1, NTSR1, TRHR and TACR1 internalize as a complex with arrestin and traffic with it to endosomal vesicles, presumably as desensitized receptors, for extended periods of time. Receptor resensitization then requires that receptor-bound arrestin is removed so that the receptor can be dephosphorylated and returned to the plasma membrane. Involved in internalization of P2RY4 and UTP-stimulated internalization of P2RY2. Involved in phosphorylation-dependent internalization of OPRD1 ands subsequent recycling. Involved in the degradation of cAMP by recruiting cAMP phosphodiesterases to ligand-activated receptors. Beta-arrestins function as multivalent adapter proteins that can switch the GPCR from a G-protein signaling mode that transmits short-lived signals from the plasma membrane via small molecule second messengers and ion channels to a beta-arrestin signaling mode that transmits a distinct set of signals that are initiated as the receptor internalizes and transits the intracellular compartment. Acts as a signaling scaffold for MAPK pathways such as MAPK1/3 (ERK1/2). ERK1/2 activated by the beta-arrestin scaffold is largely excluded from the nucleus and confined to cytoplasmic locations such as endocytic vesicles, also called beta-arrestin signalosomes. Recruits c-Src/SRC to ADRB2 resulting in ERK activation. GPCRs for which the beta-arrestin-mediated signaling relies on both ARRB1 and ARRB2 (codependent regulation) include ADRB2, F2RL1 and PTH1R. For some GPCRs the beta-arrestin-mediated signaling relies on either ARRB1 or ARRB2 and is inhibited by the other respective beta-arrestin form (reciprocal regulation). Inhibits ERK1/2 signaling in AGTR1- and AVPR2-mediated activation (reciprocal regulation). Is required for SP-stimulated endocytosis of NK1R and recruits c-Src/SRC to internalized NK1R resulting in ERK1/2 activation, which is required for the antiapoptotic effects of SP. Is involved in proteinase-activated F2RL1-mediated ERK activity. Acts as a signaling scaffold for the AKT1 pathway. Is involved in alpha-thrombin-stimulated AKT1 signaling. Is involved in IGF1-stimulated AKT1 signaling leading to increased protection from apoptosis. Involved in activation of the p38 MAPK signaling pathway and in actin bundle formation. Involved in F2RL1-mediated cytoskeletal rearrangement and chemotaxis. Involved in AGTR1-mediated stress fiber formation by acting together with GNAQ to activate RHOA. Appears to function as signaling scaffold involved in regulation of MIP-1-beta-stimulated CCR5-dependent chemotaxis. Involved in attenuation of NF-kappa-B-dependent transcription in response to GPCR or cytokine stimulation by interacting with and stabilizing CHUK. May serve as nuclear messenger for GPCRs. Involved in OPRD1-stimulated transcriptional regulation by translocating to CDKN1B and FOS promoter regions and recruiting EP300 resulting in acetylation of histone H4. Involved in regulation of LEF1 transcriptional activity via interaction with DVL1 and/or DVL2 Also involved in regulation of receptors other than GPCRs. Involved in Toll-like receptor and IL-1 receptor signaling through the interaction with TRAF6 which prevents TRAF6 autoubiquitination and oligomerization required for activation of NF-kappa-B and JUN. Involved in IL8-mediated granule release in neutrophils. Binds phosphoinositides. Binds inositolhexakisphosphate (InsP6). Required for atypical chemokine receptor ACKR2-induced RAC1-LIMK1-PAK1-dependent phosphorylation of cofilin (CFL1) and for the up-regulation of ACKR2 from endosomal compartment to cell membrane, increasing its efficiency in chemokine uptake and degradation. Involved in the internalization of the atypical chemokine receptor ACKR3. Negatively regulates the NOTCH signaling pathway by mediating the ubiquitination and degradation of NOTCH1 by ITCH. Participates in the recruitment of the ubiquitin-protein ligase to the receptor. This is Beta-arrestin-1 (ARRB1) from Macaca fascicularis (Crab-eating macaque).